Consider the following 426-residue polypeptide: Glutamate-1-semialdehyde 2,1-aminomutase (426 aa).

Lys-265 bears the N6-(pyridoxal phosphate)lysine mark.

The protein belongs to the class-III pyridoxal-phosphate-dependent aminotransferase family. HemL subfamily. In terms of assembly, homodimer. Pyridoxal 5'-phosphate serves as cofactor.

Its subcellular location is the cytoplasm. The catalysed reaction is (S)-4-amino-5-oxopentanoate = 5-aminolevulinate. Its pathway is porphyrin-containing compound metabolism; protoporphyrin-IX biosynthesis; 5-aminolevulinate from L-glutamyl-tRNA(Glu): step 2/2. The polypeptide is Glutamate-1-semialdehyde 2,1-aminomutase (Salmonella newport (strain SL254)).